A 159-amino-acid polypeptide reads, in one-letter code: Ribosomal RNA large subunit methyltransferase H (159 aa).

Residues Leu-76, Gly-108, and 127-132 (FSKMTF) contribute to the S-adenosyl-L-methionine site.

It belongs to the RNA methyltransferase RlmH family. In terms of assembly, homodimer.

The protein localises to the cytoplasm. It carries out the reaction pseudouridine(1915) in 23S rRNA + S-adenosyl-L-methionine = N(3)-methylpseudouridine(1915) in 23S rRNA + S-adenosyl-L-homocysteine + H(+). Functionally, specifically methylates the pseudouridine at position 1915 (m3Psi1915) in 23S rRNA. The polypeptide is Ribosomal RNA large subunit methyltransferase H (Staphylococcus saprophyticus subsp. saprophyticus (strain ATCC 15305 / DSM 20229 / NCIMB 8711 / NCTC 7292 / S-41)).